The primary structure comprises 147 residues: Small ribosomal subunit protein uS9 (147 aa).

Belongs to the universal ribosomal protein uS9 family.

The chain is Small ribosomal subunit protein uS9 (rps16) from Dictyostelium discoideum (Social amoeba).